Reading from the N-terminus, the 314-residue chain is MKVTVIGAGNVGATVAECVARQDVAKEVVMVDIKDGMPQGKALDMRESSPIHGFDTRVTGTNDYGPTEDSDVCIITAGLPRSPGMSRDDLLAKNTEIVGGVTEQFVEGSPDSTIIVVANPLDVMTYVAYEASGFPTNRVMGMAGVLDTGRFRSFIAEELDVSVRDVQALLMGGHGDTMVPLPRYTTVGGIPVPQLIDDARIEEIVERTKGAGGEIVDLMGTSAWYAPGAAAAEMTEAILKDNKRILPCAAYCDGEYGLDDLFIGVPVKLGAGGVEEVIEVDLDADEKAQLKTSAGHVHSNLDDLQRLRDEGKIG.

NAD(+) contacts are provided by residues 7 to 12 (GAGNVG) and Asp-32. Arg-81 and Arg-87 together coordinate substrate. NAD(+) is bound by residues Asn-94 and 117–119 (VAN). Positions 119 and 150 each coordinate substrate. Residue His-174 is the Proton acceptor of the active site.

This sequence belongs to the LDH/MDH superfamily. MDH type 3 family.

It catalyses the reaction (S)-malate + NAD(+) = oxaloacetate + NADH + H(+). In terms of biological role, catalyzes the reversible oxidation of malate to oxaloacetate. This Salinibacter ruber (strain DSM 13855 / M31) protein is Malate dehydrogenase.